Reading from the N-terminus, the 310-residue chain is Protein-L-isoaspartate O-methyltransferase (310 aa).

Disordered stretches follow at residues 1-46 (MSGE…DKPA) and 60-79 (ALPG…TVLK). The span at 14–34 (EDLKRAPRKSEVRSGSGERHA) shows a compositional bias: basic and acidic residues. A compositionally biased stretch (low complexity) spans 35-46 (ASAVPKAADKPA). Ser-157 is a catalytic residue.

Belongs to the methyltransferase superfamily. L-isoaspartyl/D-aspartyl protein methyltransferase family.

It is found in the cytoplasm. It catalyses the reaction [protein]-L-isoaspartate + S-adenosyl-L-methionine = [protein]-L-isoaspartate alpha-methyl ester + S-adenosyl-L-homocysteine. In terms of biological role, catalyzes the methyl esterification of L-isoaspartyl residues in peptides and proteins that result from spontaneous decomposition of normal L-aspartyl and L-asparaginyl residues. It plays a role in the repair and/or degradation of damaged proteins. The polypeptide is Protein-L-isoaspartate O-methyltransferase (Burkholderia ambifaria (strain ATCC BAA-244 / DSM 16087 / CCUG 44356 / LMG 19182 / AMMD) (Burkholderia cepacia (strain AMMD))).